The chain runs to 274 residues: 3-methyl-2-oxobutanoate hydroxymethyltransferase (274 aa).

Residues aspartate 46 and aspartate 85 each contribute to the Mg(2+) site. Residues 46-47, aspartate 85, and lysine 115 contribute to the 3-methyl-2-oxobutanoate site; that span reads DS. Residue glutamate 117 coordinates Mg(2+). Glutamate 184 serves as the catalytic Proton acceptor.

It belongs to the PanB family. Homodecamer; pentamer of dimers. Mg(2+) is required as a cofactor.

It localises to the cytoplasm. The enzyme catalyses 3-methyl-2-oxobutanoate + (6R)-5,10-methylene-5,6,7,8-tetrahydrofolate + H2O = 2-dehydropantoate + (6S)-5,6,7,8-tetrahydrofolate. It functions in the pathway cofactor biosynthesis; (R)-pantothenate biosynthesis; (R)-pantoate from 3-methyl-2-oxobutanoate: step 1/2. Functionally, catalyzes the reversible reaction in which hydroxymethyl group from 5,10-methylenetetrahydrofolate is transferred onto alpha-ketoisovalerate to form ketopantoate. The sequence is that of 3-methyl-2-oxobutanoate hydroxymethyltransferase from Thermoanaerobacter pseudethanolicus (strain ATCC 33223 / 39E) (Clostridium thermohydrosulfuricum).